Reading from the N-terminus, the 274-residue chain is 2,3,4,5-tetrahydropyridine-2,6-dicarboxylate N-succinyltransferase (274 aa).

Substrate-binding residues include arginine 107 and aspartate 144.

Belongs to the transferase hexapeptide repeat family. In terms of assembly, homotrimer.

The protein localises to the cytoplasm. It catalyses the reaction (S)-2,3,4,5-tetrahydrodipicolinate + succinyl-CoA + H2O = (S)-2-succinylamino-6-oxoheptanedioate + CoA. The protein operates within amino-acid biosynthesis; L-lysine biosynthesis via DAP pathway; LL-2,6-diaminopimelate from (S)-tetrahydrodipicolinate (succinylase route): step 1/3. This chain is 2,3,4,5-tetrahydropyridine-2,6-dicarboxylate N-succinyltransferase, found in Cereibacter sphaeroides (strain ATCC 17029 / ATH 2.4.9) (Rhodobacter sphaeroides).